Reading from the N-terminus, the 177-residue chain is Thymidine kinase (177 aa).

Position 11 to 18 (11 to 18) interacts with ATP; it reads GPMLSGKS. Glu-83 serves as the catalytic Proton acceptor. Substrate is bound at residue Phe-113. The Zn(2+) site is built by Cys-138 and Cys-141. Residue 157–161 participates in substrate binding; that stretch reads IEIIG. Zn(2+) contacts are provided by Cys-170 and Cys-173.

It belongs to the thymidine kinase family. As to quaternary structure, homotetramer. Two molecules of substrate bind to each enzyme tetramer.

It catalyses the reaction thymidine + ATP = dTMP + ADP + H(+). Functionally, phosphorylates thymidine and thymidine analogs, such as azidothymidine (AZT). Part of the salvage pathway for pyrimidine deoxyribonucleotide synthesis. The chain is Thymidine kinase (OPG101) from Monkeypox virus (strain Zaire-96-I-16) (MPX).